A 227-amino-acid polypeptide reads, in one-letter code: Cytidylate kinase (227 aa).

12–20 serves as a coordination point for ATP; that stretch reads GPSGAGKGT.

This sequence belongs to the cytidylate kinase family. Type 1 subfamily.

It is found in the cytoplasm. The catalysed reaction is CMP + ATP = CDP + ADP. It carries out the reaction dCMP + ATP = dCDP + ADP. The chain is Cytidylate kinase from Xanthomonas euvesicatoria pv. vesicatoria (strain 85-10) (Xanthomonas campestris pv. vesicatoria).